A 314-amino-acid chain; its full sequence is UPF0761 membrane protein VP0125 (314 aa).

Helical transmembrane passes span 41–61 (YLAYITLLSIVPMLTVLLSIL), 104–124 (MSAVGGGFLFIAALMLISNID), 139–159 (LVFSFSMYWMVLTLGPILVGA), 185–205 (FLRWLPLLLSFFAFLGLYILV), 217–237 (VGAAVAAILFELSKKGFALYI), and 249–269 (ALAAIPILFVWVYLCWMIVLL). The interval 295–314 (ESQLANEGSESSDSANSTSQ) is disordered.

The protein belongs to the UPF0761 family.

The protein localises to the cell inner membrane. The protein is UPF0761 membrane protein VP0125 of Vibrio parahaemolyticus serotype O3:K6 (strain RIMD 2210633).